The chain runs to 519 residues: Ribonuclease Y (519 aa).

A helical transmembrane segment spans residues 3-23 (PMTVLISILLTLLGLVVGYYV). The 64-residue stretch at 209 to 272 (TVSVVNLPND…ETARIALDKL (64 aa)) folds into the KH domain. Residues 335-428 (VLKHSMEVAF…VAAADALSAA (94 aa)) enclose the HD domain.

It belongs to the RNase Y family.

It localises to the cell membrane. In terms of biological role, endoribonuclease that initiates mRNA decay. The sequence is that of Ribonuclease Y from Bacillus velezensis (strain DSM 23117 / BGSC 10A6 / LMG 26770 / FZB42) (Bacillus amyloliquefaciens subsp. plantarum).